Here is a 325-residue protein sequence, read N- to C-terminus: NADH-quinone oxidoreductase subunit H (325 aa).

8 helical membrane-spanning segments follow: residues 11–31 (VLIA…CGAL), 81–101 (MIFT…FAIV), 114–134 (IGIL…LFAG), 149–169 (ASAQ…GVVA), 186–206 (MWNV…GVAV), 237–257 (FFVG…TMFF), 265–285 (LPPF…FILI), and 304–324 (ICLP…LYNA).

The protein belongs to the complex I subunit 1 family. As to quaternary structure, NDH-1 is composed of 13 different subunits. Subunits NuoA, H, J, K, L, M, N constitute the membrane sector of the complex.

Its subcellular location is the cell inner membrane. It carries out the reaction a quinone + NADH + 5 H(+)(in) = a quinol + NAD(+) + 4 H(+)(out). Functionally, NDH-1 shuttles electrons from NADH, via FMN and iron-sulfur (Fe-S) centers, to quinones in the respiratory chain. The immediate electron acceptor for the enzyme in this species is believed to be ubiquinone. Couples the redox reaction to proton translocation (for every two electrons transferred, four hydrogen ions are translocated across the cytoplasmic membrane), and thus conserves the redox energy in a proton gradient. This subunit may bind ubiquinone. The protein is NADH-quinone oxidoreductase subunit H of Photorhabdus laumondii subsp. laumondii (strain DSM 15139 / CIP 105565 / TT01) (Photorhabdus luminescens subsp. laumondii).